Reading from the N-terminus, the 736-residue chain is Fidgetin (736 aa).

Disordered stretches follow at residues 118–155 (GMTP…CGNH), 180–248 (TYSG…YSPG), 272–295 (IPGY…GSSA), and 341–438 (STRG…AEEQ). Positions 128-150 (VTASVGSSTGVASSLSEPSYSSS) are enriched in low complexity. Residues 205 to 214 (QPPPPPPPTL) are compositionally biased toward pro residues. The segment covering 216 to 232 (PSYNTSSPNLSSYNYPP) has biased composition (low complexity). Polar residues predominate over residues 352–368 (DTSSLAFKPTKQSMPTD). ATP-binding positions include Ala-467 and 507-512 (GTGRTL).

The protein belongs to the AAA ATPase family.

The protein resides in the nucleus matrix. It localises to the cytoplasm. The protein localises to the cytoskeleton. It is found in the microtubule organizing center. Its subcellular location is the centrosome. Functionally, ATP-dependent microtubule severing protein. Severs microtubules along their length and depolymerizes their ends, primarily the minus-end, suppressing microtubule growth from and attachment to centrosomes. Microtubule severing may promote rapid reorganization of cellular microtubule arrays and the release of microtubules from the centrosome following nucleation. Microtubule release from the mitotic spindle poles may allow depolymerization of the microtubule end proximal to the spindle pole, leading to poleward microtubule flux and poleward motion of chromosome. This Danio rerio (Zebrafish) protein is Fidgetin (fign).